A 200-amino-acid chain; its full sequence is NADH-quinone oxidoreductase subunit C (200 aa).

This sequence belongs to the complex I 30 kDa subunit family. In terms of assembly, NDH-1 is composed of 14 different subunits. Subunits NuoB, C, D, E, F, and G constitute the peripheral sector of the complex.

The protein resides in the cell inner membrane. It carries out the reaction a quinone + NADH + 5 H(+)(in) = a quinol + NAD(+) + 4 H(+)(out). In terms of biological role, NDH-1 shuttles electrons from NADH, via FMN and iron-sulfur (Fe-S) centers, to quinones in the respiratory chain. The immediate electron acceptor for the enzyme in this species is believed to be ubiquinone. Couples the redox reaction to proton translocation (for every two electrons transferred, four hydrogen ions are translocated across the cytoplasmic membrane), and thus conserves the redox energy in a proton gradient. This is NADH-quinone oxidoreductase subunit C from Burkholderia thailandensis (strain ATCC 700388 / DSM 13276 / CCUG 48851 / CIP 106301 / E264).